Reading from the N-terminus, the 575-residue chain is Potassium-transporting ATPase potassium-binding subunit (575 aa).

The next 12 membrane-spanning stretches (helical) occupy residues 4-24 (SAWG…WPVG), 61-81 (LRYA…VYAL), 133-153 (GLAV…FALI), 180-200 (LWVL…QGVI), 258-278 (LANL…CFAF), 289-309 (WAVL…VIPA), 344-364 (IDAS…AVIA), 372-392 (LGGM…GGVG), 394-414 (GLYG…LMIG), 431-451 (LISI…AVAV), 499-519 (LLGL…LAIA), and 545-565 (LLIG…LALG).

It belongs to the KdpA family. In terms of assembly, the system is composed of three essential subunits: KdpA, KdpB and KdpC.

The protein localises to the cell inner membrane. Functionally, part of the high-affinity ATP-driven potassium transport (or Kdp) system, which catalyzes the hydrolysis of ATP coupled with the electrogenic transport of potassium into the cytoplasm. This subunit binds the periplasmic potassium ions and delivers the ions to the membrane domain of KdpB through an intramembrane tunnel. In Variovorax paradoxus (strain S110), this protein is Potassium-transporting ATPase potassium-binding subunit.